The primary structure comprises 132 residues: Small ribosomal subunit protein uS8c (132 aa).

Belongs to the universal ribosomal protein uS8 family. In terms of assembly, part of the 30S ribosomal subunit.

The protein resides in the plastid. The protein localises to the cyanelle. In terms of biological role, one of the primary rRNA binding proteins, it binds directly to 16S rRNA central domain where it helps coordinate assembly of the platform of the 30S subunit. The polypeptide is Small ribosomal subunit protein uS8c (rps8) (Cyanophora paradoxa).